The primary structure comprises 303 residues: Methionyl-tRNA formyltransferase (303 aa).

Residue 111 to 114 (SLLP) coordinates (6S)-5,6,7,8-tetrahydrofolate.

Belongs to the Fmt family.

The catalysed reaction is L-methionyl-tRNA(fMet) + (6R)-10-formyltetrahydrofolate = N-formyl-L-methionyl-tRNA(fMet) + (6S)-5,6,7,8-tetrahydrofolate + H(+). Functionally, attaches a formyl group to the free amino group of methionyl-tRNA(fMet). The formyl group appears to play a dual role in the initiator identity of N-formylmethionyl-tRNA by promoting its recognition by IF2 and preventing the misappropriation of this tRNA by the elongation apparatus. This chain is Methionyl-tRNA formyltransferase, found in Ehrlichia canis (strain Jake).